Consider the following 406-residue polypeptide: Phosphopentomutase (406 aa).

6 residues coordinate Mn(2+): D10, D305, H310, D346, H347, and H358.

This sequence belongs to the phosphopentomutase family. It depends on Mn(2+) as a cofactor.

The protein localises to the cytoplasm. It carries out the reaction 2-deoxy-alpha-D-ribose 1-phosphate = 2-deoxy-D-ribose 5-phosphate. It catalyses the reaction alpha-D-ribose 1-phosphate = D-ribose 5-phosphate. Its pathway is carbohydrate degradation; 2-deoxy-D-ribose 1-phosphate degradation; D-glyceraldehyde 3-phosphate and acetaldehyde from 2-deoxy-alpha-D-ribose 1-phosphate: step 1/2. Functionally, isomerase that catalyzes the conversion of deoxy-ribose 1-phosphate (dRib-1-P) and ribose 1-phosphate (Rib-1-P) to deoxy-ribose 5-phosphate (dRib-5-P) and ribose 5-phosphate (Rib-5-P), respectively. In Vibrio parahaemolyticus serotype O3:K6 (strain RIMD 2210633), this protein is Phosphopentomutase.